Reading from the N-terminus, the 150-residue chain is Dual specificity protein phosphatase 23 (150 aa).

The Tyrosine-protein phosphatase domain maps to 7 to 150; sequence NFSWVLPGRL…AVFQFYQRTK (144 aa). Cysteine 95 functions as the Phosphocysteine intermediate in the catalytic mechanism.

It belongs to the protein-tyrosine phosphatase family. Non-receptor class dual specificity subfamily. As to expression, widely expressed. Highly expressed in spleen, prostate, colon, adrenal gland, mammary gland, thyroid and trachea. Expressed at lower level in uterus, small intestine, bladder, bone marrow, brain, spinal cord and stomach.

It localises to the cytoplasm. The protein resides in the cytosol. The protein localises to the nucleus. The catalysed reaction is O-phospho-L-tyrosyl-[protein] + H2O = L-tyrosyl-[protein] + phosphate. It carries out the reaction O-phospho-L-seryl-[protein] + H2O = L-seryl-[protein] + phosphate. The enzyme catalyses O-phospho-L-threonyl-[protein] + H2O = L-threonyl-[protein] + phosphate. Functionally, protein phosphatase that mediates dephosphorylation of proteins phosphorylated on Tyr and Ser/Thr residues. In vitro, it can dephosphorylate p44-ERK1 (MAPK3) but not p54 SAPK-beta (MAPK10) in vitro. Able to enhance activation of JNK and p38 (MAPK14). This is Dual specificity protein phosphatase 23 (DUSP23) from Homo sapiens (Human).